The primary structure comprises 512 residues: Glutathione-binding protein GsiB (512 aa).

Positions 1–26 are cleaved as a signal peptide; it reads MARAVHRSGLVALGIATALMASCAFA.

Belongs to the bacterial solute-binding protein 5 family. In terms of assembly, the complex is composed of two ATP-binding proteins (GsiA), two transmembrane proteins (GsiC and GsiD) and a solute-binding protein (GsiB).

The protein resides in the periplasm. Functionally, part of the ABC transporter complex GsiABCD involved in glutathione import. Binds glutathione. The sequence is that of Glutathione-binding protein GsiB from Escherichia coli O6:K15:H31 (strain 536 / UPEC).